A 212-amino-acid polypeptide reads, in one-letter code: Cyclin-dependent kinase inhibitor 3 (212 aa).

The segment covering 1-12 has biased composition (polar residues); that stretch reads MKPPSSIQTSEF. The tract at residues 1–23 is disordered; sequence MKPPSSIQTSEFDSSDEEPIEDE. An interaction with CDK2 region spans residues 1 to 34; it reads MKPPSSIQTSEFDSSDEEPIEDEQTPIQISWLPL. The segment covering 13–23 has biased composition (acidic residues); it reads DSSDEEPIEDE. In terms of domain architecture, Tyrosine-protein phosphatase spans 32-201; the sequence is LPLSRVNYSQ…FRDKLAAHLS (170 aa). Cys140 (phosphocysteine intermediate) is an active-site residue.

The protein belongs to the protein-tyrosine phosphatase family. In terms of assembly, interacts with cyclin-dependent kinases such as CDK1, CDK2 and CDK3. Does not interact with CDK4. Interacts (via C-terminus) with phosphorylated CDK2 (via C-terminal helix). Interacts with MS4A3 (via C-terminus); the interaction enhances CDKN3 enzymatic activity.

Its subcellular location is the cytoplasm. The protein localises to the perinuclear region. It carries out the reaction O-phospho-L-tyrosyl-[protein] + H2O = L-tyrosyl-[protein] + phosphate. The enzyme catalyses O-phospho-L-seryl-[protein] + H2O = L-seryl-[protein] + phosphate. It catalyses the reaction O-phospho-L-threonyl-[protein] + H2O = L-threonyl-[protein] + phosphate. In terms of biological role, may play a role in cell cycle regulation. Dual specificity phosphatase active toward substrates containing either phosphotyrosine or phosphoserine residues. Dephosphorylates CDK2 at 'Thr-160' in a cyclin-dependent manner. The chain is Cyclin-dependent kinase inhibitor 3 from Sus scrofa (Pig).